Consider the following 227-residue polypeptide: Ribosomal RNA small subunit methyltransferase G (227 aa).

S-adenosyl-L-methionine is bound by residues G69, F74, 119 to 120 (VE), and R134.

Belongs to the methyltransferase superfamily. RNA methyltransferase RsmG family.

The protein localises to the cytoplasm. Functionally, specifically methylates the N7 position of a guanine in 16S rRNA. This is Ribosomal RNA small subunit methyltransferase G from Mycoplasmopsis pulmonis (strain UAB CTIP) (Mycoplasma pulmonis).